The chain runs to 723 residues: Peroxisomal bifunctional enzyme (723 aa).

Positions 1 to 282 (MAEYTRLHNA…FAERKANKWS (282 aa)) are enoyl-CoA hydratase / isomerase. The residue at position 38 (K38) is an N6-succinyllysine. A substrate-binding site is contributed by G101. The residue at position 165 (K165) is an N6-acetyllysine; alternate. K165 bears the N6-succinyllysine; alternate mark. K171 is subject to N6-acetyllysine. K219 carries the N6-acetyllysine; alternate modification. K219 bears the N6-succinyllysine; alternate mark. Residue K250 is modified to N6-acetyllysine. N6-succinyllysine occurs at positions 280 and 290. The interval 283–572 (TPSGASWKTA…DVLCELGRFG (290 aa)) is 3-hydroxyacyl-CoA dehydrogenase. 3 positions are modified to N6-acetyllysine: K346, K350, and K464. Position 532 is an N6-succinyllysine (K532). Residue T548 is modified to Phosphothreonine. K577 is modified (N6-succinyllysine). N6-acetyllysine; alternate is present on residues K584, K591, and K710. 3 positions are modified to N6-succinyllysine; alternate: K584, K591, and K710. S718 bears the Phosphoserine mark. A Microbody targeting signal motif is present at residues 721–723 (SKL). K722 is modified (N6-succinyllysine).

In the N-terminal section; belongs to the enoyl-CoA hydratase/isomerase family. It in the C-terminal section; belongs to the 3-hydroxyacyl-CoA dehydrogenase family. In terms of assembly, monomer. Acetylated, leading to enhanced enzyme activity. Acetylation is enhanced by up to 80% after treatment either with trichostin A (TSA) or with nicotinamide (NAM) with highest increase on Lys-346. Acetylation and enzyme activity increased by about 1.5% on addition of fatty acids. Liver and kidney. Strongly expressed in the terminal segments of the proximal tubule. Lower amounts seen in the brain.

Its subcellular location is the peroxisome. It carries out the reaction a (3S)-3-hydroxyacyl-CoA = a (2E)-enoyl-CoA + H2O. The enzyme catalyses a 4-saturated-(3S)-3-hydroxyacyl-CoA = a (3E)-enoyl-CoA + H2O. It catalyses the reaction a (3Z)-enoyl-CoA = a 4-saturated (2E)-enoyl-CoA. The catalysed reaction is a (3E)-enoyl-CoA = a 4-saturated (2E)-enoyl-CoA. It carries out the reaction a (3S)-3-hydroxyacyl-CoA + NAD(+) = a 3-oxoacyl-CoA + NADH + H(+). The enzyme catalyses (2S,3S)-3-hydroxy-2-methylbutanoyl-CoA = (2E)-2-methylbut-2-enoyl-CoA + H2O. It catalyses the reaction (3S)-hydroxyhexadecanoyl-CoA + NAD(+) = 3-oxohexadecanoyl-CoA + NADH + H(+). The catalysed reaction is (3S)-hydroxyhexadecanoyl-CoA = (2E)-hexadecenoyl-CoA + H2O. It carries out the reaction (2E)-hexadecenedioyl-CoA + H2O = (3S)-hydroxyhexadecanedioyl-CoA. The enzyme catalyses (3S)-hydroxyhexadecanedioyl-CoA + NAD(+) = 3-oxohexadecanedioyl-CoA + NADH + H(+). It catalyses the reaction (3E,5Z)-tetradecadienoyl-CoA = (2E,5Z)-tetradecadienoyl-CoA. The catalysed reaction is (3E,5Z)-octadienoyl-CoA = (2E,5Z)-octadienoyl-CoA. It carries out the reaction (3S)-hydroxydecanoyl-CoA + NAD(+) = 3-oxodecanoyl-CoA + NADH + H(+). The enzyme catalyses (3E)-decenoyl-CoA = (2E)-decenoyl-CoA. It catalyses the reaction (3Z)-hexenoyl-CoA = (2E)-hexenoyl-CoA. The catalysed reaction is (3E)-hexenoyl-CoA = (2E)-hexenoyl-CoA. It carries out the reaction (3S)-hydroxydecanoyl-CoA = (2E)-decenoyl-CoA + H2O. The enzyme catalyses (3S)-hydroxyhexanoyl-CoA = (2E)-hexenoyl-CoA + H2O. Its pathway is lipid metabolism; fatty acid beta-oxidation. With respect to regulation, enzyme activity enhanced by acetylation. Peroxisomal trifunctional enzyme possessing 2-enoyl-CoA hydratase, 3-hydroxyacyl-CoA dehydrogenase, and delta 3, delta 2-enoyl-CoA isomerase activities. Catalyzes two of the four reactions of the long chain fatty acids peroxisomal beta-oxidation pathway. Can also use branched-chain fatty acids such as 2-methyl-2E-butenoyl-CoA as a substrate, which is hydrated into (2S,3S)-3-hydroxy-2-methylbutanoyl-CoA. Optimal isomerase for 2,5 double bonds into 3,5 form isomerization in a range of enoyl-CoA species. Also able to isomerize both 3-cis and 3-trans double bonds into the 2-trans form in a range of enoyl-CoA species. With HSD17B4, catalyzes the hydration of trans-2-enoyl-CoA and the dehydrogenation of 3-hydroxyacyl-CoA, but with opposite chiral specificity. Regulates the amount of medium-chain dicarboxylic fatty acids which are essential regulators of all fatty acid oxidation pathways. Also involved in the degradation of long-chain dicarboxylic acids through peroxisomal beta-oxidation. The polypeptide is Peroxisomal bifunctional enzyme (Homo sapiens (Human)).